Reading from the N-terminus, the 360-residue chain is Phospho-N-acetylmuramoyl-pentapeptide-transferase (360 aa).

10 helical membrane-spanning segments follow: residues 21-41 (YITF…LWIG), 73-93 (TMGG…WADL), 98-118 (VWFV…DDYW), 132-152 (WKYF…YAVG), 168-188 (FMPQ…VGTS), 199-219 (GLAI…AWAT), 236-256 (AGEL…FLWY), 263-283 (VFMG…IAVL), 288-308 (LLLV…ILQV), and 338-358 (VIVC…VTLK).

The protein belongs to the glycosyltransferase 4 family. MraY subfamily. Mg(2+) is required as a cofactor.

It is found in the cell inner membrane. The catalysed reaction is UDP-N-acetyl-alpha-D-muramoyl-L-alanyl-gamma-D-glutamyl-meso-2,6-diaminopimeloyl-D-alanyl-D-alanine + di-trans,octa-cis-undecaprenyl phosphate = di-trans,octa-cis-undecaprenyl diphospho-N-acetyl-alpha-D-muramoyl-L-alanyl-D-glutamyl-meso-2,6-diaminopimeloyl-D-alanyl-D-alanine + UMP. Its pathway is cell wall biogenesis; peptidoglycan biosynthesis. Functionally, catalyzes the initial step of the lipid cycle reactions in the biosynthesis of the cell wall peptidoglycan: transfers peptidoglycan precursor phospho-MurNAc-pentapeptide from UDP-MurNAc-pentapeptide onto the lipid carrier undecaprenyl phosphate, yielding undecaprenyl-pyrophosphoryl-MurNAc-pentapeptide, known as lipid I. This Actinobacillus pleuropneumoniae serotype 7 (strain AP76) protein is Phospho-N-acetylmuramoyl-pentapeptide-transferase.